The primary structure comprises 505 residues: ATP synthase subunit beta (505 aa).

Residues 1-25 are disordered; sequence MAKAATPKETAAVKKPAAPKKAATA. Residue 183 to 190 participates in ATP binding; the sequence is GGAGVGKT.

Belongs to the ATPase alpha/beta chains family. As to quaternary structure, F-type ATPases have 2 components, CF(1) - the catalytic core - and CF(0) - the membrane proton channel. CF(1) has five subunits: alpha(3), beta(3), gamma(1), delta(1), epsilon(1). CF(0) has three main subunits: a(1), b(2) and c(9-12). The alpha and beta chains form an alternating ring which encloses part of the gamma chain. CF(1) is attached to CF(0) by a central stalk formed by the gamma and epsilon chains, while a peripheral stalk is formed by the delta and b chains.

It is found in the cell inner membrane. The enzyme catalyses ATP + H2O + 4 H(+)(in) = ADP + phosphate + 5 H(+)(out). Its function is as follows. Produces ATP from ADP in the presence of a proton gradient across the membrane. The catalytic sites are hosted primarily by the beta subunits. In Sinorhizobium fredii (strain NBRC 101917 / NGR234), this protein is ATP synthase subunit beta.